Here is a 181-residue protein sequence, read N- to C-terminus: MMNIILIGARGAGKSKVSRSLSKQSEIPVVSTDSVAVYETGGIPIPKFVENNGWKAFRELEYSILQKLQNANGIILDCGGGILFDLDESGNEVLSERKLDLLRKIGRIVYLERGIEELVEKVKGDKTRPDLSKITTYRSILEKRLPVYQEAAHFKLNLTKLSKEEAAEKILDWIGIKSKSI.

11-16 (GAGKSK) lines the ATP pocket. Ser15 lines the Mg(2+) pocket. Residues Asp33, Arg58, and Gly80 each coordinate substrate. ATP is bound at residue Arg128. Substrate is bound at residue Arg144.

The protein belongs to the shikimate kinase family. Monomer. It depends on Mg(2+) as a cofactor.

It is found in the cytoplasm. The enzyme catalyses shikimate + ATP = 3-phosphoshikimate + ADP + H(+). It functions in the pathway metabolic intermediate biosynthesis; chorismate biosynthesis; chorismate from D-erythrose 4-phosphate and phosphoenolpyruvate: step 5/7. Functionally, catalyzes the specific phosphorylation of the 3-hydroxyl group of shikimic acid using ATP as a cosubstrate. In Leptospira biflexa serovar Patoc (strain Patoc 1 / Ames), this protein is Shikimate kinase.